We begin with the raw amino-acid sequence, 483 residues long: Probable cysteine protease ATG4 (483 aa).

Catalysis depends on Cys141, which acts as the Nucleophile. Active-site residues include Asp315 and His317.

Belongs to the peptidase C54 family.

The protein resides in the cytoplasm. It localises to the nucleus. Its subcellular location is the preautophagosomal structure. It catalyses the reaction [protein]-C-terminal L-amino acid-glycyl-phosphatidylethanolamide + H2O = [protein]-C-terminal L-amino acid-glycine + a 1,2-diacyl-sn-glycero-3-phosphoethanolamine. Functionally, cysteine protease that plays a key role in cytoplasm to vacuole transport (Cvt) and autophagy by mediating both proteolytic activation and delipidation of ATG8. Required for selective autophagic degradation of the nucleus (nucleophagy) as well as for mitophagy which contributes to regulate mitochondrial quantity and quality by eliminating the mitochondria to a basal level to fulfill cellular energy requirements and preventing excess ROS production. The protease activity is required for proteolytic activation of ATG8: cleaves the C-terminal amino acid of ATG8 to reveal a C-terminal glycine. ATG8 ubiquitin-like activity requires the exposure of the glycine at the C-terminus for its conjugation to phosphatidylethanolamine (PE) and its insertion to membranes, which is necessary for autophagy. The ATG8-PE conjugate mediates tethering between adjacent membranes and stimulates membrane hemifusion, leading to expansion of the autophagosomal membrane during autophagy. In addition to the protease activity, also catalyzes deconjugation of PE-conjugated forms of ATG8 during macroautophagy: ATG8 delipidation is required to release the protein from membranes, which facilitates multiple events during macroautophagy, and especially for efficient autophagosome biogenesis, the assembly of ATG9-containing tubulovesicular clusters into phagophores/autophagosomes, and for the disassembly of PAS-associated ATG components. ATG8 delipidation by ATG4 also recycles ATG8-PE generated on inappropriate membranes to maintain a reservoir of unlipidated ATG8 that is required for autophagosome formation at the PAS. This Candida glabrata (strain ATCC 2001 / BCRC 20586 / JCM 3761 / NBRC 0622 / NRRL Y-65 / CBS 138) (Yeast) protein is Probable cysteine protease ATG4 (ATG4).